The following is a 571-amino-acid chain: MREYVLIFLVAPVFAAILGPYDIPPELPPLNDENFFDRSHSEYETVLTPEDFELGTRITAAMAHDNGDDIWDSDAMYSKDRFEGDIANDNLNASTAELFANGGSGKSEDGKWYNAIKNRLQLWPEGRIPYTISSQYSSYSRSLIAASMQEYASHTCIRWVPKEAADVNYVHIYPDRGCYSMVGKMGGKQSLSLGSGCIQKGIILHELMHAVGFFHEQSRTDRDDHITIMWNNIQAGMQGQFEKYGHGTIQSLGTGYDYGSIMHYGTKAFSRNGQPTMIPKKNGATIGQRNGFSKVDKFKINTLYGCPVEGEKPTTSAPTSGPIVITVKPVVITTGKPPVIQTVSPAVPLKPSECRNLRGDCDDLAKQGWCIRNPGWMRANCPISCGMCIPTKETQKPYVQTTTQAATTTARPQKPVTQPIQPLPPVPPLPPTTPEDCEDLRVDCLVLVSQRYCKISQNFMKSYCAKSCGFCFKPPPTEIPDNRPTVVTTRPLVTLPPAVIRSRSPAPPVSTTTKAAPTTSTTSAAPYSPTPLPSECSDRKHFCSHWKSAGFCEGIFMNYMKKNCPASCGLC.

Residues 1 to 15 (MREYVLIFLVAPVFA) form the signal peptide. Asn92 carries an N-linked (GlcNAc...) asparagine glycan. One can recognise a Peptidase M12A domain in the interval 114 to 307 (NAIKNRLQLW…FKINTLYGCP (194 aa)). 5 disulfides stabilise this stretch: Cys156/Cys306, Cys178/Cys197, Cys354/Cys388, Cys361/Cys381, and Cys370/Cys385. His205 contacts Zn(2+). Glu206 is a catalytic residue. 2 residues coordinate Zn(2+): His209 and His215. The region spanning 354-388 (CRNLRGDCDDLAKQGWCIRNPGWMRANCPISCGMC) is the ShKT 1 domain. Low complexity predominate over residues 407–420 (TTTARPQKPVTQPI). Residues 407 to 426 (TTTARPQKPVTQPIQPLPPV) are disordered. 3 disulfides stabilise this stretch: Cys437–Cys471, Cys444–Cys464, and Cys453–Cys468. In terms of domain architecture, ShKT 2 spans 437-471 (CEDLRVDCLVLVSQRYCKISQNFMKSYCAKSCGFC). The disordered stretch occupies residues 500-530 (IRSRSPAPPVSTTTKAAPTTSTTSAAPYSPT). Positions 509 to 527 (VSTTTKAAPTTSTTSAAPY) are enriched in low complexity. Disulfide bonds link Cys536–Cys571, Cys543–Cys564, and Cys552–Cys568. A ShKT 3 domain is found at 536 to 571 (CSDRKHFCSHWKSAGFCEGIFMNYMKKNCPASCGLC).

It depends on Zn(2+) as a cofactor. Expressed in pharyngeal marginal cells and muscles.

The protein localises to the secreted. In terms of biological role, metalloprotease. The polypeptide is Zinc metalloproteinase nas-15 (nas-15) (Caenorhabditis elegans).